A 280-amino-acid chain; its full sequence is Phosphatidylglycerol--prolipoprotein diacylglyceryl transferase (280 aa).

3 consecutive transmembrane segments (helical) span residues 19–39 (LSVR…YFVA), 56–76 (IIFY…VIFQ), and 90–110 (IWHG…AGVI). Arg138 lines the a 1,2-diacyl-sn-glycero-3-phospho-(1'-sn-glycerol) pocket. The next 2 membrane-spanning stretches (helical) occupy residues 204-224 (LGET…FIEG) and 236-256 (IRVA…LIVY).

It belongs to the Lgt family.

The protein localises to the cell membrane. It catalyses the reaction L-cysteinyl-[prolipoprotein] + a 1,2-diacyl-sn-glycero-3-phospho-(1'-sn-glycerol) = an S-1,2-diacyl-sn-glyceryl-L-cysteinyl-[prolipoprotein] + sn-glycerol 1-phosphate + H(+). The protein operates within protein modification; lipoprotein biosynthesis (diacylglyceryl transfer). In terms of biological role, catalyzes the transfer of the diacylglyceryl group from phosphatidylglycerol to the sulfhydryl group of the N-terminal cysteine of a prolipoprotein, the first step in the formation of mature lipoproteins. This is Phosphatidylglycerol--prolipoprotein diacylglyceryl transferase from Staphylococcus aureus (strain MRSA252).